The chain runs to 312 residues: Homoserine O-succinyltransferase (312 aa).

Cysteine 142 serves as the catalytic Acyl-thioester intermediate. Positions 163 and 192 each coordinate substrate. Residue histidine 235 is the Proton acceptor of the active site. The active site involves glutamate 237. Arginine 249 provides a ligand contact to substrate.

It belongs to the MetA family.

It localises to the cytoplasm. The enzyme catalyses L-homoserine + succinyl-CoA = O-succinyl-L-homoserine + CoA. The protein operates within amino-acid biosynthesis; L-methionine biosynthesis via de novo pathway; O-succinyl-L-homoserine from L-homoserine: step 1/1. In terms of biological role, transfers a succinyl group from succinyl-CoA to L-homoserine, forming succinyl-L-homoserine. The polypeptide is Homoserine O-succinyltransferase (Aliivibrio salmonicida (strain LFI1238) (Vibrio salmonicida (strain LFI1238))).